The primary structure comprises 69 residues: Large ribosomal subunit protein bL31 (69 aa).

Residues cysteine 16, cysteine 18, cysteine 37, and cysteine 40 each contribute to the Zn(2+) site.

The protein belongs to the bacterial ribosomal protein bL31 family. Type A subfamily. Part of the 50S ribosomal subunit. The cofactor is Zn(2+).

Functionally, binds the 23S rRNA. This is Large ribosomal subunit protein bL31 from Teredinibacter turnerae (strain ATCC 39867 / T7901).